Consider the following 181-residue polypeptide: Translation initiation factor IF-3 (181 aa).

It belongs to the IF-3 family. Monomer.

Its subcellular location is the cytoplasm. In terms of biological role, IF-3 binds to the 30S ribosomal subunit and shifts the equilibrium between 70S ribosomes and their 50S and 30S subunits in favor of the free subunits, thus enhancing the availability of 30S subunits on which protein synthesis initiation begins. This Azotobacter vinelandii protein is Translation initiation factor IF-3.